A 95-amino-acid polypeptide reads, in one-letter code: Probable dolichol-phosphate mannosyltransferase subunit 3 (95 aa).

The next 2 helical transmembrane spans lie at 10–30 (AHVI…VPVL) and 44–64 (APFF…VYGV).

It belongs to the DPM3 family.

It is found in the endoplasmic reticulum membrane. It participates in protein modification; protein glycosylation. In terms of biological role, stabilizer subunit of the dolichol-phosphate-mannose synthase complex. The polypeptide is Probable dolichol-phosphate mannosyltransferase subunit 3 (dpm-3) (Caenorhabditis elegans).